Consider the following 326-residue polypeptide: Tagatose 1,6-diphosphate aldolase (326 aa).

It belongs to the aldolase LacD family.

The enzyme catalyses D-tagatofuranose 1,6-bisphosphate = D-glyceraldehyde 3-phosphate + dihydroxyacetone phosphate. It participates in carbohydrate metabolism; D-tagatose 6-phosphate degradation; D-glyceraldehyde 3-phosphate and glycerone phosphate from D-tagatose 6-phosphate: step 2/2. This is Tagatose 1,6-diphosphate aldolase from Staphylococcus aureus (strain Mu3 / ATCC 700698).